Reading from the N-terminus, the 405-residue chain is NADH-quinone oxidoreductase subunit D (405 aa).

It belongs to the complex I 49 kDa subunit family. NDH-1 is composed of 14 different subunits. Subunits NuoB, C, D, E, F, and G constitute the peripheral sector of the complex.

The protein resides in the cell inner membrane. It carries out the reaction a quinone + NADH + 5 H(+)(in) = a quinol + NAD(+) + 4 H(+)(out). Its function is as follows. NDH-1 shuttles electrons from NADH, via FMN and iron-sulfur (Fe-S) centers, to quinones in the respiratory chain. The immediate electron acceptor for the enzyme in this species is believed to be ubiquinone. Couples the redox reaction to proton translocation (for every two electrons transferred, four hydrogen ions are translocated across the cytoplasmic membrane), and thus conserves the redox energy in a proton gradient. In Ruegeria pomeroyi (strain ATCC 700808 / DSM 15171 / DSS-3) (Silicibacter pomeroyi), this protein is NADH-quinone oxidoreductase subunit D.